We begin with the raw amino-acid sequence, 313 residues long: Protein FixB (313 aa).

FAD is bound at residue 255–283 (LYLAVGISGQIQHMVGANASQTIFAINKD).

This sequence belongs to the ETF alpha-subunit/FixB family. Heterodimer of FixA and FixB.

The protein operates within amine and polyamine metabolism; carnitine metabolism. Its function is as follows. Required for anaerobic carnitine reduction. May bring reductant to CaiA. The chain is Protein FixB from Shigella flexneri.